Consider the following 231-residue polypeptide: 2-C-methyl-D-erythritol 2,4-cyclodiphosphate synthase, chloroplastic (231 aa).

Residues 1–52 (MATSSTQLLLSSSSLFHSQITKKPFLLPATKIGVWRPKKSLSLSCRPSASVS) constitute a chloroplast transit peptide. A divalent metal cation contacts are provided by aspartate 82 and histidine 84. Residues 82 to 84 (DLH), 108 to 109 (HS), 112 to 120 (DVLLHCVVD), 130 to 132 (DIG), 135 to 139 (FPDSD), aspartate 139, 174 to 180 (LQRPKIS), and 205 to 209 (AKTHE) each bind substrate. An a divalent metal cation-binding site is contributed by histidine 116.

This sequence belongs to the IspF family. Homotrimer. The cofactor is a divalent metal cation.

It is found in the plastid. The protein localises to the chloroplast stroma. The catalysed reaction is 4-CDP-2-C-methyl-D-erythritol 2-phosphate = 2-C-methyl-D-erythritol 2,4-cyclic diphosphate + CMP. Its pathway is isoprenoid biosynthesis; isopentenyl diphosphate biosynthesis via DXP pathway; isopentenyl diphosphate from 1-deoxy-D-xylulose 5-phosphate: step 4/6. Enzyme of the plastid non-mevalonate pathway for isoprenoid biosynthesis that converts 4-diphosphocytidyl-2C-methyl-D-erythritol 2-phosphate into 2C-methyl-D-erythritol 2,4-cyclodiphosphate and CMP. Is essential for chloroplast development. The protein is 2-C-methyl-D-erythritol 2,4-cyclodiphosphate synthase, chloroplastic of Arabidopsis thaliana (Mouse-ear cress).